A 901-amino-acid chain; its full sequence is Protein translocase subunit SecA (901 aa).

Residues Gln-87, 105–109, and Asp-512 contribute to the ATP site; that span reads GEGKT. Residues 868–901 form a disordered region; the sequence is AALAAQTGERKVGRNDPCPCGSGKKYKQCHGRLQ. Zn(2+) is bound by residues Cys-885, Cys-887, Cys-896, and His-897. Basic residues predominate over residues 891-901; it reads KKYKQCHGRLQ.

This sequence belongs to the SecA family. Monomer and homodimer. Part of the essential Sec protein translocation apparatus which comprises SecA, SecYEG and auxiliary proteins SecDF-YajC and YidC. The cofactor is Zn(2+).

The protein resides in the cell inner membrane. Its subcellular location is the cytoplasm. It catalyses the reaction ATP + H2O + cellular proteinSide 1 = ADP + phosphate + cellular proteinSide 2.. Part of the Sec protein translocase complex. Interacts with the SecYEG preprotein conducting channel. Has a central role in coupling the hydrolysis of ATP to the transfer of proteins into and across the cell membrane, serving both as a receptor for the preprotein-SecB complex and as an ATP-driven molecular motor driving the stepwise translocation of polypeptide chains across the membrane. The polypeptide is Protein translocase subunit SecA (Escherichia coli O45:K1 (strain S88 / ExPEC)).